The following is a 221-amino-acid chain: uncharacterized protein (221 aa).

4 helical membrane-spanning segments follow: residues 30-50, 62-82, 144-164, and 179-199; these read FGIFLALSIEFIPAEVVLPLA, AGVVLAGSLGGVAGPLTLYWI, VWVFSLYTFIAMLPITFVYVY, and ILDQYMLPIGIAILALFLLYL.

It belongs to the DedA family.

It is found in the cell membrane. This is an uncharacterized protein from Bacillus subtilis (strain 168).